Here is a 145-residue protein sequence, read N- to C-terminus: Large-conductance mechanosensitive channel (145 aa).

Transmembrane regions (helical) follow at residues Val14–Leu34 and Gly83–Val103.

This sequence belongs to the MscL family. As to quaternary structure, homopentamer.

The protein localises to the cell inner membrane. Its function is as follows. Channel that opens in response to stretch forces in the membrane lipid bilayer. May participate in the regulation of osmotic pressure changes within the cell. The polypeptide is Large-conductance mechanosensitive channel (Paracoccus denitrificans (strain Pd 1222)).